Reading from the N-terminus, the 227-residue chain is MMVSFFDQFASPSYLGIPLIAIAIALPWVLYPTSSSRWINNRLITIQGWFINRFTNQLMLPLNVGGHKWALLLASLMIFLITINMLGLLPYTFTPTTQLSLNMGFAVPLWLATVIIGMRNQPTVALGHLLPEGTPIPLIPVLIIIETISLFIRPLALGVRLTANLTAGHLLIQLIATAVFVLMPMMPTVAILTATVLFLLTLLEVAVAMIQAYVFVLLLSLYLQENV.

6 helical membrane-spanning segments follow: residues 9-29 (FASP…LPWV), 69-89 (WALL…LGLL), 98-118 (QLSL…IIGM), 132-152 (EGTP…SLFI), 165-185 (LTAG…LMPM), and 190-210 (AILT…VAMI).

This sequence belongs to the ATPase A chain family. As to quaternary structure, component of the ATP synthase complex composed at least of ATP5F1A/subunit alpha, ATP5F1B/subunit beta, ATP5MC1/subunit c (homooctomer), MT-ATP6/subunit a, MT-ATP8/subunit 8, ATP5ME/subunit e, ATP5MF/subunit f, ATP5MG/subunit g, ATP5MK/subunit k, ATP5MJ/subunit j, ATP5F1C/subunit gamma, ATP5F1D/subunit delta, ATP5F1E/subunit epsilon, ATP5PF/subunit F6, ATP5PB/subunit b, ATP5PD/subunit d, ATP5PO/subunit OSCP. ATP synthase complex consists of a soluble F(1) head domain (subunits alpha(3) and beta(3)) - the catalytic core - and a membrane F(0) domain - the membrane proton channel (subunits c, a, 8, e, f, g, k and j). These two domains are linked by a central stalk (subunits gamma, delta, and epsilon) rotating inside the F1 region and a stationary peripheral stalk (subunits F6, b, d, and OSCP). Interacts with DNAJC30; interaction is direct.

It localises to the mitochondrion inner membrane. The catalysed reaction is H(+)(in) = H(+)(out). Subunit a, of the mitochondrial membrane ATP synthase complex (F(1)F(0) ATP synthase or Complex V) that produces ATP from ADP in the presence of a proton gradient across the membrane which is generated by electron transport complexes of the respiratory chain. ATP synthase complex consist of a soluble F(1) head domain - the catalytic core - and a membrane F(1) domain - the membrane proton channel. These two domains are linked by a central stalk rotating inside the F(1) region and a stationary peripheral stalk. During catalysis, ATP synthesis in the catalytic domain of F(1) is coupled via a rotary mechanism of the central stalk subunits to proton translocation. With the subunit c (ATP5MC1), forms the proton-conducting channel in the F(0) domain, that contains two crucial half-channels (inlet and outlet) that facilitate proton movement from the mitochondrial intermembrane space (IMS) into the matrix. Protons are taken up via the inlet half-channel and released through the outlet half-channel, following a Grotthuss mechanism. This chain is ATP synthase F(0) complex subunit a, found in Carassius auratus (Goldfish).